We begin with the raw amino-acid sequence, 342 residues long: Dihydroorotase (342 aa).

Positions 13 and 15 each coordinate Zn(2+). Residues 15–17 (HLR) and Asn41 contribute to the substrate site. Positions 98, 135, and 173 each coordinate Zn(2+). Residue Lys98 is modified to N6-carboxylysine. His135 is a substrate binding site. Leu218 contacts substrate. Asp246 contacts Zn(2+). The active site involves Asp246. Residues His250 and Ala262 each coordinate substrate.

Belongs to the metallo-dependent hydrolases superfamily. DHOase family. Class II DHOase subfamily. Homodimer. Zn(2+) serves as cofactor.

The catalysed reaction is (S)-dihydroorotate + H2O = N-carbamoyl-L-aspartate + H(+). It participates in pyrimidine metabolism; UMP biosynthesis via de novo pathway; (S)-dihydroorotate from bicarbonate: step 3/3. Catalyzes the reversible cyclization of carbamoyl aspartate to dihydroorotate. The polypeptide is Dihydroorotase (Vibrio parahaemolyticus serotype O3:K6 (strain RIMD 2210633)).